A 600-amino-acid chain; its full sequence is Chaperonin 60 subunit beta 1, chloroplastic (600 aa).

Over residues 1 to 12 (MASTFTATSSIG) the composition is skewed to polar residues. A disordered region spans residues 1-23 (MASTFTATSSIGSMVAPNGHKSD). A chloroplast-targeting transit peptide spans 1–54 (MASTFTATSSIGSMVAPNGHKSDKKLISKLSSSSFGRRQSVCPRPRRSSSAIVC). 2 positions are modified to phosphoserine: Ser-101 and Ser-478.

The protein belongs to the chaperonin (HSP60) family. As to quaternary structure, part of the Cpn60 complex composed of 7 alpha and 7 beta subunits. Can also form a complex composed of 14 beta subunits only. Both complexes show ATPase activity. The Cpn60 complex interacts with the Cpn10 complex. Interacts with RAB during heat stress. As to expression, expressed in leaves, stems, petioles and flowers.

It is found in the plastid. The protein localises to the chloroplast stroma. Its function is as follows. Binds RuBisCO small and large subunits and is implicated in the assembly of the enzyme oligomer. Involved in protein assisted folding. Required for proper plastid division. This Arabidopsis thaliana (Mouse-ear cress) protein is Chaperonin 60 subunit beta 1, chloroplastic (CPN60B1).